A 476-amino-acid chain; its full sequence is Aspartyl/glutamyl-tRNA(Asn/Gln) amidotransferase subunit B (476 aa).

Belongs to the GatB/GatE family. GatB subfamily. In terms of assembly, heterotrimer of A, B and C subunits.

The catalysed reaction is L-glutamyl-tRNA(Gln) + L-glutamine + ATP + H2O = L-glutaminyl-tRNA(Gln) + L-glutamate + ADP + phosphate + H(+). It catalyses the reaction L-aspartyl-tRNA(Asn) + L-glutamine + ATP + H2O = L-asparaginyl-tRNA(Asn) + L-glutamate + ADP + phosphate + 2 H(+). Its function is as follows. Allows the formation of correctly charged Asn-tRNA(Asn) or Gln-tRNA(Gln) through the transamidation of misacylated Asp-tRNA(Asn) or Glu-tRNA(Gln) in organisms which lack either or both of asparaginyl-tRNA or glutaminyl-tRNA synthetases. The reaction takes place in the presence of glutamine and ATP through an activated phospho-Asp-tRNA(Asn) or phospho-Glu-tRNA(Gln). This chain is Aspartyl/glutamyl-tRNA(Asn/Gln) amidotransferase subunit B, found in Solidesulfovibrio magneticus (strain ATCC 700980 / DSM 13731 / RS-1) (Desulfovibrio magneticus).